Reading from the N-terminus, the 519-residue chain is Chaperone SurA (519 aa).

Residues 1–31 (MMRSLHSLRRMSGTVLALMLAAGLPLSAAQA) form the signal peptide. Composition is skewed to low complexity over residues 31–45 (AQPAKPAPKGDQKPA) and 197–207 (PAAAQATRAPA). 2 disordered regions span residues 31 to 50 (AQPAKPAPKGDQKPATPAPS) and 196 to 221 (NPAAAQATRAPAPQQPQPQPRQPAQS). Residues 223-324 (PAMLVLAQIL…NGFHILKVVD (102 aa)) form the PpiC 1 domain. The segment at 328–361 (GGQPAQAARPAPAPAPQQPSSFQEGPSVAAPQGP) is disordered. Residues 364 to 463 (VTQTHARHIL…FGWHLIQVLE (100 aa)) form the PpiC 2 domain.

It is found in the periplasm. The enzyme catalyses [protein]-peptidylproline (omega=180) = [protein]-peptidylproline (omega=0). Its function is as follows. Chaperone involved in the correct folding and assembly of outer membrane proteins. Recognizes specific patterns of aromatic residues and the orientation of their side chains, which are found more frequently in integral outer membrane proteins. May act in both early periplasmic and late outer membrane-associated steps of protein maturation. This chain is Chaperone SurA, found in Bordetella bronchiseptica (strain ATCC BAA-588 / NCTC 13252 / RB50) (Alcaligenes bronchisepticus).